The sequence spans 478 residues: Protein nucleotidyltransferase YdiU (478 aa).

Residues Gly84, Gly86, Arg87, Lys107, Asp119, Gly120, Arg170, and Arg177 each coordinate ATP. Catalysis depends on Asp246, which acts as the Proton acceptor. Mg(2+) contacts are provided by Asn247 and Asp256. Asp256 contributes to the ATP binding site.

The protein belongs to the SELO family. Mg(2+) is required as a cofactor. Mn(2+) serves as cofactor.

It catalyses the reaction L-seryl-[protein] + ATP = 3-O-(5'-adenylyl)-L-seryl-[protein] + diphosphate. It carries out the reaction L-threonyl-[protein] + ATP = 3-O-(5'-adenylyl)-L-threonyl-[protein] + diphosphate. The enzyme catalyses L-tyrosyl-[protein] + ATP = O-(5'-adenylyl)-L-tyrosyl-[protein] + diphosphate. The catalysed reaction is L-histidyl-[protein] + UTP = N(tele)-(5'-uridylyl)-L-histidyl-[protein] + diphosphate. It catalyses the reaction L-seryl-[protein] + UTP = O-(5'-uridylyl)-L-seryl-[protein] + diphosphate. It carries out the reaction L-tyrosyl-[protein] + UTP = O-(5'-uridylyl)-L-tyrosyl-[protein] + diphosphate. Its function is as follows. Nucleotidyltransferase involved in the post-translational modification of proteins. It can catalyze the addition of adenosine monophosphate (AMP) or uridine monophosphate (UMP) to a protein, resulting in modifications known as AMPylation and UMPylation. This is Protein nucleotidyltransferase YdiU from Shigella boydii serotype 4 (strain Sb227).